The following is a 427-amino-acid chain: Serine--tRNA ligase (427 aa).

Position 231–233 (231–233) interacts with L-serine; the sequence is TAE. ATP is bound at residue 262 to 264; the sequence is RSE. Glu-285 contacts L-serine. ATP is bound at residue 349–352; sequence EISS. Residue Ser-385 participates in L-serine binding.

This sequence belongs to the class-II aminoacyl-tRNA synthetase family. Type-1 seryl-tRNA synthetase subfamily. In terms of assembly, homodimer. The tRNA molecule binds across the dimer.

The protein localises to the cytoplasm. It catalyses the reaction tRNA(Ser) + L-serine + ATP = L-seryl-tRNA(Ser) + AMP + diphosphate + H(+). The enzyme catalyses tRNA(Sec) + L-serine + ATP = L-seryl-tRNA(Sec) + AMP + diphosphate + H(+). Its pathway is aminoacyl-tRNA biosynthesis; selenocysteinyl-tRNA(Sec) biosynthesis; L-seryl-tRNA(Sec) from L-serine and tRNA(Sec): step 1/1. Functionally, catalyzes the attachment of serine to tRNA(Ser). Is also able to aminoacylate tRNA(Sec) with serine, to form the misacylated tRNA L-seryl-tRNA(Sec), which will be further converted into selenocysteinyl-tRNA(Sec). The sequence is that of Serine--tRNA ligase from Methylococcus capsulatus (strain ATCC 33009 / NCIMB 11132 / Bath).